We begin with the raw amino-acid sequence, 91 residues long: Defensin-like protein 95 (91 aa).

Residues Met-1–Gly-27 form the signal peptide. Disulfide bonds link Cys-31-Cys-76, Cys-38-Cys-63, Cys-47-Cys-73, and Cys-51-Cys-75.

It belongs to the DEFL family.

It is found in the secreted. In Arabidopsis thaliana (Mouse-ear cress), this protein is Defensin-like protein 95.